A 458-amino-acid chain; its full sequence is Vacuolar basic amino acid transporter 3 (458 aa).

Residues 1 to 9 (MNMLIVGRV) are Cytoplasmic-facing. The chain crosses the membrane as a helical span at residues 10–30 (VASVGGSGLQTLCFVIGCTMV). The Vacuolar portion of the chain corresponds to 31–36 (GERSRP). A helical transmembrane segment spans residues 37 to 57 (LVISILSCAFAVAAIVGPIIG). Over 58–67 (GAFTTHVTWR) the chain is Cytoplasmic. A helical membrane pass occupies residues 68-88 (WCFYINLPIGGLAIIMFLLTY). Residues 89–132 (KAENKGILQQIKDAIGTISSFTFSKFRHQVNFKRLMNGIIFKFD) are Vacuolar-facing. Residues 133-153 (FFGFALCSAGLVLFLLGLTFG) form a helical membrane-spanning segment. The Cytoplasmic segment spans residues 154 to 163 (GNKYSWNSGQ). Residues 164–184 (VIAYLVLGVLLFIFSLVYDFF) traverse the membrane as a helical segment. Topologically, residues 185–205 (LFDKFNPEPDNISYRPLLLRR) are vacuolar. Asparagine 195 is a glycosylation site (N-linked (GlcNAc...) asparagine). A helical transmembrane segment spans residues 206–226 (LVAKPAIIIINMVTFLLCTGY). Residues 227–248 (NGQMIYSVQFFQLIFASSAWKA) lie on the Cytoplasmic side of the membrane. A helical membrane pass occupies residues 249–269 (GLHLIPIVITNVIAAIASGVI). Residues 270–277 (TKKLGLVK) lie on the Vacuolar side of the membrane. Residues 278–298 (PLLIFGGVLGVIGAGLMTLMT) form a helical membrane-spanning segment. The Cytoplasmic portion of the chain corresponds to 299–306 (NTSTKSTQ). Residues 307-327 (IGVLLLPGFSLGFALQASLMS) form a helical membrane-spanning segment. The Vacuolar segment spans residues 328–415 (AQLQITKDRP…STIGNILSDS (88 aa)). A helical transmembrane segment spans residues 416-436 (IKNVFWMDLGFYALGFLFCSF). The Cytoplasmic portion of the chain corresponds to 437–458 (SSNKKLIIPKKDETPEDNLEDK).

Belongs to the major facilitator superfamily.

The protein resides in the vacuole membrane. Transporter required for vacuolar uptake of histidine and lysine. The chain is Vacuolar basic amino acid transporter 3 (VBA3) from Saccharomyces cerevisiae (strain ATCC 204508 / S288c) (Baker's yeast).